Here is a 612-residue protein sequence, read N- to C-terminus: C4-dicarboxylate transport sensor protein DctB (612 aa).

2 helical membrane passes run 23-43 (SLVI…YFAE) and 292-312 (VLLI…LLTL). Positions 328 to 376 (KRQLEERVLERTRELENANAQLQQEVHEREQAQRELMRAQDEVVQAGKL) form a coiled coil. The 215-residue stretch at 385–599 (SISHELNQPL…VVRLHLLPGV (215 aa)) folds into the Histidine kinase domain. His388 carries the phosphohistidine; by autocatalysis modification.

Autophosphorylated.

It localises to the cell inner membrane. It carries out the reaction ATP + protein L-histidine = ADP + protein N-phospho-L-histidine.. Member of the two-component regulatory system DctB/DctD, which regulates C4-dicarboxylate transport via regulation of expression of the dctPQM operon and dctA. DctB functions as a membrane-associated protein kinase that phosphorylates DctD in response to environmental signals. The chain is C4-dicarboxylate transport sensor protein DctB from Pseudomonas aeruginosa (strain ATCC 15692 / DSM 22644 / CIP 104116 / JCM 14847 / LMG 12228 / 1C / PRS 101 / PAO1).